The chain runs to 426 residues: Serine--tRNA ligase (426 aa).

Residue 233-235 participates in L-serine binding; that stretch reads TAE. 264 to 266 lines the ATP pocket; the sequence is RSE. E287 lines the L-serine pocket. 351–354 contacts ATP; it reads EISS. S387 serves as a coordination point for L-serine.

The protein belongs to the class-II aminoacyl-tRNA synthetase family. Type-1 seryl-tRNA synthetase subfamily. In terms of assembly, homodimer. The tRNA molecule binds across the dimer.

Its subcellular location is the cytoplasm. It catalyses the reaction tRNA(Ser) + L-serine + ATP = L-seryl-tRNA(Ser) + AMP + diphosphate + H(+). The catalysed reaction is tRNA(Sec) + L-serine + ATP = L-seryl-tRNA(Sec) + AMP + diphosphate + H(+). Its pathway is aminoacyl-tRNA biosynthesis; selenocysteinyl-tRNA(Sec) biosynthesis; L-seryl-tRNA(Sec) from L-serine and tRNA(Sec): step 1/1. Its function is as follows. Catalyzes the attachment of serine to tRNA(Ser). Is also able to aminoacylate tRNA(Sec) with serine, to form the misacylated tRNA L-seryl-tRNA(Sec), which will be further converted into selenocysteinyl-tRNA(Sec). The chain is Serine--tRNA ligase from Pseudomonas putida (strain W619).